Reading from the N-terminus, the 429-residue chain is Ribosomal RNA small subunit methyltransferase B (429 aa).

S-adenosyl-L-methionine-binding positions include 254–260, aspartate 277, aspartate 303, and aspartate 322; that span reads CAAPGGK. Cysteine 375 functions as the Nucleophile in the catalytic mechanism. The segment at 397 to 419 is disordered; it reads ALSETGTPDQPGQQNLPGGEEGD. A compositionally biased stretch (polar residues) spans 400–412; it reads ETGTPDQPGQQNL.

It belongs to the class I-like SAM-binding methyltransferase superfamily. RsmB/NOP family.

It is found in the cytoplasm. It catalyses the reaction cytidine(967) in 16S rRNA + S-adenosyl-L-methionine = 5-methylcytidine(967) in 16S rRNA + S-adenosyl-L-homocysteine + H(+). Specifically methylates the cytosine at position 967 (m5C967) of 16S rRNA. In Salmonella paratyphi A (strain ATCC 9150 / SARB42), this protein is Ribosomal RNA small subunit methyltransferase B.